The primary structure comprises 238 residues: Purine nucleoside phosphorylase DeoD-type (238 aa).

Residue His4 participates in a purine D-ribonucleoside binding. Residues Gly20, Arg24, Arg43, and Arg87–Ser90 contribute to the phosphate site. Residues Glu179–Glu181 and Ser203–Asp204 contribute to the a purine D-ribonucleoside site. Asp204 serves as the catalytic Proton donor.

Belongs to the PNP/UDP phosphorylase family. Homohexamer; trimer of homodimers.

It catalyses the reaction a purine D-ribonucleoside + phosphate = a purine nucleobase + alpha-D-ribose 1-phosphate. The catalysed reaction is a purine 2'-deoxy-D-ribonucleoside + phosphate = a purine nucleobase + 2-deoxy-alpha-D-ribose 1-phosphate. Catalyzes the reversible phosphorolytic breakdown of the N-glycosidic bond in the beta-(deoxy)ribonucleoside molecules, with the formation of the corresponding free purine bases and pentose-1-phosphate. The sequence is that of Purine nucleoside phosphorylase DeoD-type from Haemophilus influenzae (strain PittEE).